Reading from the N-terminus, the 551-residue chain is Urocanate hydratase (551 aa).

Residues 48-49, Gln126, 172-174, Glu192, Arg197, 238-239, 259-263, 269-270, and Tyr318 each bind NAD(+); these read GG, GMG, NA, QTSAH, and YI. Cys406 is an active-site residue. Gly488 contributes to the NAD(+) binding site.

It belongs to the urocanase family. It depends on NAD(+) as a cofactor.

It is found in the cytoplasm. It carries out the reaction 4-imidazolone-5-propanoate = trans-urocanate + H2O. The protein operates within amino-acid degradation; L-histidine degradation into L-glutamate; N-formimidoyl-L-glutamate from L-histidine: step 2/3. Its function is as follows. Catalyzes the conversion of urocanate to 4-imidazolone-5-propionate. The chain is Urocanate hydratase from Symbiobacterium thermophilum (strain DSM 24528 / JCM 14929 / IAM 14863 / T).